Here is a 149-residue protein sequence, read N- to C-terminus: Glycophorin-A (149 aa).

Positions 1-19 (MYGKIIFVLLLSAIVSISA) are cleaved as a signal peptide. The Extracellular segment spans residues 20–90 (SSTTEVAMHT…QLVHRFSEPE (71 aa)). An O-linked (GalNAc...) serine glycan is attached at serine 21. 3 O-linked (GalNAc...) threonine glycosylation sites follow: threonine 22, threonine 23, and threonine 29. A glycan (O-linked (GalNAc...) serine) is linked at serine 30. A glycan (O-linked (GalNAc...) threonine) is linked at threonine 31. The O-linked (GalNAc...) serine glycan is linked to serine 32. Threonine 35 carries an O-linked (GalNAc...) threonine glycan. 2 O-linked (GalNAc...) serine glycosylation sites follow: serine 37 and serine 40. O-linked (GalNAc...) threonine glycosylation occurs at threonine 43. Serine 44 carries an O-linked (GalNAc...) serine glycan. O-linked (GalNAc...) threonine glycans are attached at residues threonine 51 and threonine 55. Serine 62 carries O-linked (GalNAc...) serine glycosylation. Residue threonine 68 is glycosylated (O-linked (GalNAc...) threonine). A helical transmembrane segment spans residues 91–113 (ITLIIFGVMAGVIGTILLIYYSI). Residues 114–149 (RRLIKKSPSDVKPLPSPDTDVPLSSVEIENPETSDQ) are Cytoplasmic-facing. Positions 122-149 (SDVKPLPSPDTDVPLSSVEIENPETSDQ) are disordered. A phosphoserine mark is found at serine 137 and serine 147.

It belongs to the glycophorin-A family. As to quaternary structure, homodimer. Component of the ankyrin-1 complex in the erythrocyte, composed of ANK1, RHCE, RHAG, SLC4A1, EPB42, GYPA, GYPB and AQP1. Interacts with SLC4A1; a GYPA monomer is bound at each end of the SLC4A1 dimer forming a heterotetramer.

Its subcellular location is the cell membrane. Its function is as follows. Component of the ankyrin-1 complex, a multiprotein complex involved in the stability and shape of the erythrocyte membrane. Glycophorin A is the major intrinsic membrane protein of the erythrocyte. The N-terminal glycosylated segment, which lies outside the erythrocyte membrane, has MN blood group receptors. Appears to be important for the function of SLC4A1 and is required for high activity of SLC4A1. May be involved in translocation of SLC4A1 to the plasma membrane. The protein is Glycophorin-A of Pan troglodytes (Chimpanzee).